We begin with the raw amino-acid sequence, 226 residues long: ATP synthase subunit C lysine N-methyltransferase (226 aa).

A helical membrane pass occupies residues Val-35–Leu-55. Residues Thr-48 to Gly-82 form a required for mitochondrial location region.

The protein belongs to the ANT/ATPSC lysine N-methyltransferase family.

Its subcellular location is the mitochondrion membrane. Its function is as follows. Mitochondrial protein-lysine N-methyltransferase that promotes chronic pain. Involved in persistent inflammatory and neuropathic pain: methyltransferase activity in the mitochondria of sensory neurons promotes chronic pain via a pathway that depends on the production of reactive oxygen species (ROS) and on the engagement of spinal cord microglia. Protein-lysine N-methyltransferase activity is dependent on S-adenosyl-L-methionine. The polypeptide is ATP synthase subunit C lysine N-methyltransferase (atpsckmt) (Xenopus laevis (African clawed frog)).